Consider the following 454-residue polypeptide: UDP-N-acetylmuramate--L-alanine ligase (454 aa).

Position 112-118 (112-118 (GTHGKTT)) interacts with ATP.

Belongs to the MurCDEF family.

Its subcellular location is the cytoplasm. It carries out the reaction UDP-N-acetyl-alpha-D-muramate + L-alanine + ATP = UDP-N-acetyl-alpha-D-muramoyl-L-alanine + ADP + phosphate + H(+). It functions in the pathway cell wall biogenesis; peptidoglycan biosynthesis. In terms of biological role, cell wall formation. The polypeptide is UDP-N-acetylmuramate--L-alanine ligase (Nitratidesulfovibrio vulgaris (strain ATCC 29579 / DSM 644 / CCUG 34227 / NCIMB 8303 / VKM B-1760 / Hildenborough) (Desulfovibrio vulgaris)).